Consider the following 261-residue polypeptide: 5'-nucleotidase SurE (261 aa).

A divalent metal cation contacts are provided by D8, D9, S39, and N91.

The protein belongs to the SurE nucleotidase family. Requires a divalent metal cation as cofactor.

It localises to the cytoplasm. The catalysed reaction is a ribonucleoside 5'-phosphate + H2O = a ribonucleoside + phosphate. Nucleotidase that shows phosphatase activity on nucleoside 5'-monophosphates. The protein is 5'-nucleotidase SurE of Polaromonas naphthalenivorans (strain CJ2).